Reading from the N-terminus, the 220-residue chain is Probable septum site-determining protein MinC (220 aa).

Belongs to the MinC family. Interacts with MinD and FtsZ.

Functionally, cell division inhibitor that blocks the formation of polar Z ring septums. Rapidly oscillates between the poles of the cell to destabilize FtsZ filaments that have formed before they mature into polar Z rings. Prevents FtsZ polymerization. This chain is Probable septum site-determining protein MinC, found in Vibrio parahaemolyticus serotype O3:K6 (strain RIMD 2210633).